The sequence spans 433 residues: Trigger factor (433 aa).

In terms of domain architecture, PPIase FKBP-type spans 165 to 250 (GDSAIIDFEG…LHNIQEKVKV (86 aa)).

It belongs to the FKBP-type PPIase family. Tig subfamily.

It is found in the cytoplasm. It carries out the reaction [protein]-peptidylproline (omega=180) = [protein]-peptidylproline (omega=0). In terms of biological role, involved in protein export. Acts as a chaperone by maintaining the newly synthesized protein in an open conformation. Functions as a peptidyl-prolyl cis-trans isomerase. The polypeptide is Trigger factor (Sulfurimonas denitrificans (strain ATCC 33889 / DSM 1251) (Thiomicrospira denitrificans (strain ATCC 33889 / DSM 1251))).